The following is a 354-amino-acid chain: Guanine nucleotide-binding protein G(o) subunit alpha (354 aa).

The N-myristoyl glycine moiety is linked to residue glycine 2. Residue cysteine 3 is the site of S-palmitoyl cysteine attachment. Positions 32 to 354 constitute a G-alpha domain; it reads KDVKLLLLGA…ANNLRGCGLY (323 aa). Positions 35-48 are G1 motif; it reads KLLLLGAGESGKST. GTP is bound by residues glutamate 43, lysine 46, serine 47, threonine 48, serine 152, leucine 176, arginine 177, threonine 178, and arginine 179. Serine 47 is a Mg(2+) binding site. A G2 motif region spans residues 174–182; sequence DILRTRVKT. Residue threonine 182 coordinates Mg(2+). The tract at residues 197–206 is G3 motif; that stretch reads FRLFDVGGQR. 5-glutamyl histamine is present on glutamine 205. The tract at residues 266-273 is G4 motif; the sequence is ILFLNKKD. 3 residues coordinate GTP: asparagine 270, aspartate 273, and cysteine 325. A G5 motif region spans residues 324–329; the sequence is TCATDT. Cysteine 351 carries the S-palmitoyl cysteine lipid modification.

Belongs to the G-alpha family. G(i/o/t/z) subfamily. G proteins are composed of 3 units; alpha, beta and gamma. The alpha chain contains the guanine nucleotide binding site. Forms a complex with GNB1 and GNG3. Interacts with RGS14. Interacts with RGS16. Interacts with RGS19. Interacts (when palmitoylated) with ADGRG3. In terms of processing, histaminylated at Gln-205 residues by TGM2.

Its subcellular location is the cell membrane. The protein resides in the membrane. It carries out the reaction GTP + H2O = GDP + phosphate + H(+). Its activity is regulated as follows. The GTPase activity is promoted by GTPAse activators, such as RGS14, RGS16 and RGS19. Guanine nucleotide-binding proteins (G proteins) function as transducers downstream of G protein-coupled receptors (GPCRs) in numerous signaling cascades. The alpha chain contains the guanine nucleotide binding site and alternates between an active, GTP-bound state and an inactive, GDP-bound state. Signaling by an activated GPCR promotes GDP release and GTP binding. The alpha subunit has a low GTPase activity that converts bound GTP to GDP, thereby terminating the signal. Both GDP release and GTP hydrolysis are modulated by numerous regulatory proteins. Signaling is mediated via effector proteins, such as adenylate cyclase. Inhibits adenylate cyclase activity, leading to decreased intracellular cAMP levels. The polypeptide is Guanine nucleotide-binding protein G(o) subunit alpha (GNAO1) (Bos taurus (Bovine)).